The following is a 79-amino-acid chain: D-alanyl carrier protein (79 aa).

Residues Met1–Glu77 enclose the Carrier domain. At Ser35 the chain carries O-(pantetheine 4'-phosphoryl)serine.

This sequence belongs to the DltC family. Post-translationally, 4'-phosphopantetheine is transferred from CoA to a specific serine of apo-DCP.

It is found in the cytoplasm. Its pathway is cell wall biogenesis; lipoteichoic acid biosynthesis. Its function is as follows. Carrier protein involved in the D-alanylation of lipoteichoic acid (LTA). The loading of thioester-linked D-alanine onto DltC is catalyzed by D-alanine--D-alanyl carrier protein ligase DltA. The DltC-carried D-alanyl group is further transferred to cell membrane phosphatidylglycerol (PG) by forming an ester bond, probably catalyzed by DltD. D-alanylation of LTA plays an important role in modulating the properties of the cell wall in Gram-positive bacteria, influencing the net charge of the cell wall. The chain is D-alanyl carrier protein from Lactobacillus helveticus (strain DPC 4571).